A 261-amino-acid chain; its full sequence is tRNA pseudouridine synthase A (261 aa).

The Nucleophile role is filled by D51. Y109 is a binding site for substrate.

The protein belongs to the tRNA pseudouridine synthase TruA family. In terms of assembly, homodimer.

It catalyses the reaction uridine(38/39/40) in tRNA = pseudouridine(38/39/40) in tRNA. Functionally, formation of pseudouridine at positions 38, 39 and 40 in the anticodon stem and loop of transfer RNAs. The polypeptide is tRNA pseudouridine synthase A (Shewanella sp. (strain MR-4)).